Reading from the N-terminus, the 333-residue chain is Protein amalgam (333 aa).

An N-terminal signal peptide occupies residues 1 to 23 (MARLRLLIGLIFCLAISLDSVLS). The Ig-like V-type domain occupies 25 to 128 (PVISQISKDV…VLVSATEKVT (104 aa)). Residues N45 and N86 are each glycosylated (N-linked (GlcNAc...) asparagine). 3 cysteine pairs are disulfide-bonded: C46–C117, C161–C208, and C251–C307. Ig-like C2-type domains are found at residues 139 to 223 (PVIA…RLIR) and 230 to 323 (PQIA…LHLF). N-linked (GlcNAc...) asparagine glycosylation occurs at N308.

The protein localises to the cell membrane. This is Protein amalgam (Ama) from Drosophila melanogaster (Fruit fly).